Consider the following 232-residue polypeptide: Small ribosomal subunit protein uS3 (232 aa).

The 69-residue stretch at 39-107 folds into the KH type-2 domain; sequence VRQFLTSELK…PAQINIAEVR (69 aa). A disordered region spans residues 213–232; that stretch reads AANAVEPKGDKPKKQRKGRK.

The protein belongs to the universal ribosomal protein uS3 family. In terms of assembly, part of the 30S ribosomal subunit. Forms a tight complex with proteins S10 and S14.

In terms of biological role, binds the lower part of the 30S subunit head. Binds mRNA in the 70S ribosome, positioning it for translation. This Vibrio parahaemolyticus serotype O3:K6 (strain RIMD 2210633) protein is Small ribosomal subunit protein uS3.